Reading from the N-terminus, the 184-residue chain is Photosystem I assembly protein Ycf4 (184 aa).

2 consecutive transmembrane segments (helical) span residues 22–42 and 57–77; these read FCWA…GISS and ILFF…LFIS.

Belongs to the Ycf4 family.

Its subcellular location is the plastid. It localises to the chloroplast thylakoid membrane. Its function is as follows. Seems to be required for the assembly of the photosystem I complex. This Illicium oligandrum (Star anise) protein is Photosystem I assembly protein Ycf4.